Here is a 319-residue protein sequence, read N- to C-terminus: Acetyl-coenzyme A carboxylase carboxyl transferase subunit alpha (319 aa).

The 255-residue stretch at 39–293 (KLEQKAAQLL…GDAIAEELKG (255 aa)) folds into the CoA carboxyltransferase C-terminal domain.

This sequence belongs to the AccA family. As to quaternary structure, acetyl-CoA carboxylase is a heterohexamer composed of biotin carboxyl carrier protein (AccB), biotin carboxylase (AccC) and two subunits each of ACCase subunit alpha (AccA) and ACCase subunit beta (AccD).

The protein resides in the cytoplasm. The catalysed reaction is N(6)-carboxybiotinyl-L-lysyl-[protein] + acetyl-CoA = N(6)-biotinyl-L-lysyl-[protein] + malonyl-CoA. It functions in the pathway lipid metabolism; malonyl-CoA biosynthesis; malonyl-CoA from acetyl-CoA: step 1/1. Its function is as follows. Component of the acetyl coenzyme A carboxylase (ACC) complex. First, biotin carboxylase catalyzes the carboxylation of biotin on its carrier protein (BCCP) and then the CO(2) group is transferred by the carboxyltransferase to acetyl-CoA to form malonyl-CoA. This Parvibaculum lavamentivorans (strain DS-1 / DSM 13023 / NCIMB 13966) protein is Acetyl-coenzyme A carboxylase carboxyl transferase subunit alpha.